We begin with the raw amino-acid sequence, 233 residues long: Germin-like protein (233 aa).

Positions 1-22 are cleaved as a signal peptide; it reads MEAYKMFAFVVLLATTLYQAYA. A disulfide bridge links Cys32 with Cys49. The Cupin type-1 domain occupies 63-215; the sequence is RGLNMPANTD…RPSISMRIWS (153 aa). 4 residues coordinate Mn(2+): His111, His113, Glu118, and His162.

This sequence belongs to the germin family. As to quaternary structure, oligomer (believed to be a pentamer but probably hexamer). In terms of tissue distribution, expressed at high levels in unstressed roots.

It is found in the secreted. The protein localises to the extracellular space. It localises to the apoplast. Its function is as follows. May be involved in seed germination. The protein is Germin-like protein of Mesembryanthemum crystallinum (Common ice plant).